Reading from the N-terminus, the 387-residue chain is Aminodeoxyfutalosine deaminase (387 aa).

The span at 1–10 shows a compositional bias: basic and acidic residues; it reads MRPAYDDPRT. The disordered stretch occupies residues 1 to 37; it reads MRPAYDDPRTTDQPITRARPPPRAARGRRLGEEPLTE. His61 and His63 together coordinate Zn(2+). 3 residues coordinate substrate: Arg116, Asp183, and Gly217. His244 serves as a coordination point for Zn(2+). The active-site Proton donor is the Glu247. Asp325 contributes to the Zn(2+) binding site.

Belongs to the metallo-dependent hydrolases superfamily. Adenosine and AMP deaminases family. Zn(2+) is required as a cofactor.

It carries out the reaction 6-amino-6-deoxyfutalosine + H2O + H(+) = futalosine + NH4(+). It participates in quinol/quinone metabolism; menaquinone biosynthesis. Catalyzes the deamination of aminodeoxyfutalosine (AFL) into futalosine (FL), a step in the biosynthesis of menaquinone (MK, vitamin K2). In Streptomyces coelicolor (strain ATCC BAA-471 / A3(2) / M145), this protein is Aminodeoxyfutalosine deaminase.